A 527-amino-acid chain; its full sequence is Succinate-semialdehyde dehydrogenase, mitochondrial (527 aa).

The transit peptide at 1 to 35 directs the protein to the mitochondrion; it reads MAMAMAMRRAAALGARHILAASSTSSSGVLLRRHM. NAD(+)-binding positions include arginine 208, 223–226, and 276–281; these read KPSE and GSTAVG. Position 208 (arginine 208) interacts with substrate. Residue glutamate 298 is the Proton acceptor of the active site. Substrate contacts are provided by arginine 326, cysteine 332, and serine 489. The active-site Nucleophile is cysteine 332. A disulfide bridge connects residues cysteine 332 and cysteine 334.

This sequence belongs to the aldehyde dehydrogenase family. As to quaternary structure, homotetramer.

Its subcellular location is the mitochondrion matrix. The enzyme catalyses succinate semialdehyde + NAD(+) + H2O = succinate + NADH + 2 H(+). It participates in amino-acid degradation; 4-aminobutanoate degradation. Redox-regulated. Inhibited under oxydizing conditions. Oxidizes specifically succinate semialdehyde. Involved in plant response to environmental stress by preventing the accumulation of reactive oxygen species. This Oryza sativa subsp. japonica (Rice) protein is Succinate-semialdehyde dehydrogenase, mitochondrial (ALDH5F1).